We begin with the raw amino-acid sequence, 556 residues long: 2-succinyl-5-enolpyruvyl-6-hydroxy-3-cyclohexene-1-carboxylate synthase (556 aa).

The protein belongs to the TPP enzyme family. MenD subfamily. As to quaternary structure, homodimer. Mg(2+) serves as cofactor. It depends on Mn(2+) as a cofactor. The cofactor is thiamine diphosphate.

It carries out the reaction isochorismate + 2-oxoglutarate + H(+) = 5-enolpyruvoyl-6-hydroxy-2-succinyl-cyclohex-3-ene-1-carboxylate + CO2. Its pathway is quinol/quinone metabolism; 1,4-dihydroxy-2-naphthoate biosynthesis; 1,4-dihydroxy-2-naphthoate from chorismate: step 2/7. It functions in the pathway quinol/quinone metabolism; menaquinone biosynthesis. Functionally, catalyzes the thiamine diphosphate-dependent decarboxylation of 2-oxoglutarate and the subsequent addition of the resulting succinic semialdehyde-thiamine pyrophosphate anion to isochorismate to yield 2-succinyl-5-enolpyruvyl-6-hydroxy-3-cyclohexene-1-carboxylate (SEPHCHC). The sequence is that of 2-succinyl-5-enolpyruvyl-6-hydroxy-3-cyclohexene-1-carboxylate synthase from Escherichia coli (strain UTI89 / UPEC).